Consider the following 499-residue polypeptide: ADP,ATP carrier protein 5 (499 aa).

Helical transmembrane passes span 25 to 45 (LGKF…QNVL), 61 to 81 (IAGF…VIIY), 93 to 113 (IFYY…FVIY), 148 to 168 (YIVY…LLFW), 183 to 203 (FYTL…FLMM), 223 to 243 (ITLV…CCLL), 286 to 306 (LWLL…VEAV), 327 to 347 (LYIL…NNIM), 356 to 376 (AVIS…LIVF), 380 to 400 (ILSL…VSIG), and 468 to 488 (LISP…IYAV).

It belongs to the ADP/ATP translocase tlc family.

Its subcellular location is the cell membrane. Provides the rickettsial cell with host ATP in exchange for rickettsial ADP. This is an obligate exchange system. This energy acquiring activity is an important component of rickettsial parasitism. The sequence is that of ADP,ATP carrier protein 5 (tlcE) from Rickettsia conorii (strain ATCC VR-613 / Malish 7).